Consider the following 246-residue polypeptide: MWIGVISLFPEMFKAITEFGVTGRAVKHNLLKVECWNPRDFTFDKHKTVDDRPYGGGPGMLMMVQPLRDAIHTAKAAAGEGAKVIYLSPQGRKLDQGGVTELAQNQKLILVCGRYEGIDERLIQTEIDEEWSIGDYVLTGGELPAMTLIDAVARFIPGVLGKQASAEEDSFADGLLDCPHYTRPEVLEGLTVPPVLMSGHHEEIRKWRLKQSLQRTWLRRPELLEGLALTDEQRKLLKEAQAEHNS.

Residues G113 and 133-138 contribute to the S-adenosyl-L-methionine site; that span reads IGDYVL.

It belongs to the RNA methyltransferase TrmD family. As to quaternary structure, homodimer.

It is found in the cytoplasm. It catalyses the reaction guanosine(37) in tRNA + S-adenosyl-L-methionine = N(1)-methylguanosine(37) in tRNA + S-adenosyl-L-homocysteine + H(+). Its function is as follows. Specifically methylates guanosine-37 in various tRNAs. The protein is tRNA (guanine-N(1)-)-methyltransferase of Haemophilus influenzae (strain PittGG).